Consider the following 300-residue polypeptide: MKELIQRSRKSFTVVHPIESDVPDNVWVKCPSCRELIYHKQLAERMKVCRCGYHMRLTAREWLALLDEGSFVEYDAHLRPTDPLGFVSPKEAYADKLRETQRRTGLADVVVSGVGSIEGYRLSIAVCDFNFIGGSMGSVFGEKMARAAERAATLGIPLLTINTSGGARMQEGVIALMQLAKVNMALTRLAAARQPHIAVLVDPCYGGVTASYASVADIIIAEPGANIGFAGRRVIEQTIRQKLPADFQTAEFMLQHGMVDMVTPRSELHGVLAKLLRLYAAEGRSGAYSSEAVAPTLASI.

One can recognise a CoA carboxyltransferase N-terminal domain in the interval 26-294 (VWVKCPSCRE…SGAYSSEAVA (269 aa)). Residues cysteine 30, cysteine 33, cysteine 49, and cysteine 51 each contribute to the Zn(2+) site. The C4-type zinc finger occupies 30 to 51 (CPSCRELIYHKQLAERMKVCRC).

Belongs to the AccD/PCCB family. Acetyl-CoA carboxylase is a heterohexamer composed of biotin carboxyl carrier protein (AccB), biotin carboxylase (AccC) and two subunits each of ACCase subunit alpha (AccA) and ACCase subunit beta (AccD). It depends on Zn(2+) as a cofactor.

The protein resides in the cytoplasm. It carries out the reaction N(6)-carboxybiotinyl-L-lysyl-[protein] + acetyl-CoA = N(6)-biotinyl-L-lysyl-[protein] + malonyl-CoA. Its pathway is lipid metabolism; malonyl-CoA biosynthesis; malonyl-CoA from acetyl-CoA: step 1/1. In terms of biological role, component of the acetyl coenzyme A carboxylase (ACC) complex. Biotin carboxylase (BC) catalyzes the carboxylation of biotin on its carrier protein (BCCP) and then the CO(2) group is transferred by the transcarboxylase to acetyl-CoA to form malonyl-CoA. This chain is Acetyl-coenzyme A carboxylase carboxyl transferase subunit beta 2, found in Roseiflexus castenholzii (strain DSM 13941 / HLO8).